Consider the following 499-residue polypeptide: Probable aspartyl protease At4g16563 (499 aa).

Positions 1-26 (MKTCLIFFLYTTILQYYFHFSVSSLS) are cleaved as a signal peptide. The Peptidase A1 domain maps to 83–487 (YLISLSVGSS…DLLNRRVGFA (405 aa)). Residue D101 is part of the active site. C111 and C119 are oxidised to a cystine. N-linked (GlcNAc...) asparagine glycosylation is found at N175 and N211. D353 is a catalytic residue. A disulfide bridge links C396 with C445. N400 and N415 each carry an N-linked (GlcNAc...) asparagine glycan.

Belongs to the peptidase A1 family.

The chain is Probable aspartyl protease At4g16563 from Arabidopsis thaliana (Mouse-ear cress).